The primary structure comprises 579 residues: Cytochrome P450 monooxygenase prx9 (579 aa).

Residues 6 to 25 (LPLGSFVGTTLLLFILYKLV) form a helical membrane-spanning segment. N194, N292, and N390 each carry an N-linked (GlcNAc...) asparagine glycan. C512 contributes to the heme binding site.

This sequence belongs to the cytochrome P450 family. Requires heme as cofactor.

The protein localises to the membrane. The protein operates within sesquiterpene biosynthesis. In terms of biological role, cytochrome P450 monooxygenase; part of the gene cluster that mediates the biosynthesis of PR-toxin, a bicyclic sesquiterpene belonging to the eremophilane class and acting as a mycotoxin. The first step of the pathway is catalyzed by the aristolochene synthase which performs the cyclization of trans,trans-farnesyl diphosphate (FPP) to the bicyclic sesquiterpene aristolochene. Following the formation of aristolochene, the non-oxygenated aristolochene is converted to the trioxygenated intermediate eremofortin B, via 7-epi-neopetasone. This conversion appears to involve three enzymes, a hydroxysterol oxidase-like enzyme, the quinone-oxidase prx3 that forms the quinone-type-structure in the bicyclic nucleus of aristolochene with the C8-oxo group and the C-3 hydroxyl group, and the P450 monooxygenase prx9 that introduces the epoxide at the double bond between carbons 1 and 2. No monoxy or dioxy-intermediates have been reported to be released to the broth, so these three early oxidative reactions may be coupled together. Eremofortin B is further oxidized by another P450 monooxygenase, that introduces a second epoxide between carbons 7 and 11 prior to acetylation to eremofortin A by the acetyltransferase prx11. The second epoxidation may be performed by a second P450 monooxygenase. After the acetylation step, eremofortin A is converted to eremofortin C and then to PR-toxin. First the conversion of eremofortin A to eremofortin C proceeds by oxidation of the side chain of the molecule at C-12 and is catalyzed by the short-chain oxidoreductase prx1. The cytochrome P450 monooxygenase prx8 also plays a role in this step. The primary alcohol formed at C-12 is finally oxidized by the short-chain alcohol dehydrogenase prx4 that forms PR-toxin. The protein is Cytochrome P450 monooxygenase prx9 of Penicillium rubens (strain ATCC 28089 / DSM 1075 / NRRL 1951 / Wisconsin 54-1255) (Penicillium chrysogenum).